Reading from the N-terminus, the 95-residue chain is Succinate dehydrogenase membrane anchor subunit (95 aa).

Residues 1–19 are Mitochondrial matrix-facing; sequence MYKTLLAQVFFHSIAKKKL. Residues 20-40 traverse the membrane as a helical segment; that stretch reads YFFWLPRLFSLLLVPGFLFDI. Glu-41 is a topological domain (mitochondrial intermembrane). A helical transmembrane segment spans residues 42-62; sequence ILFLFHPIILLHASLGLSVII. His-53 contacts heme. Over 63 to 74 the chain is Mitochondrial matrix; the sequence is EDYIHIETIKFQ. Tyr-65 is a binding site for a ubiquinone. Residues 75–95 form a helical membrane-spanning segment; sequence YLSLIKLLLVLLINLNILYLL.

Part of an enzyme complex containing four subunits: a flavoprotein, an iron-sulfur protein, plus two membrane-anchoring proteins. The cofactor is heme.

The protein localises to the mitochondrion inner membrane. The protein operates within carbohydrate metabolism; tricarboxylic acid cycle. In terms of biological role, membrane-anchoring subunit of succinate dehydrogenase (SDH). The chain is Succinate dehydrogenase membrane anchor subunit (SDH4) from Porphyra purpurea (Red seaweed).